Consider the following 329-residue polypeptide: tRNA(Ile)-lysidine synthase (329 aa).

Position 37–42 (37–42 (SGGSDS)) interacts with ATP.

The protein belongs to the tRNA(Ile)-lysidine synthase family.

It localises to the cytoplasm. The enzyme catalyses cytidine(34) in tRNA(Ile2) + L-lysine + ATP = lysidine(34) in tRNA(Ile2) + AMP + diphosphate + H(+). In terms of biological role, ligates lysine onto the cytidine present at position 34 of the AUA codon-specific tRNA(Ile) that contains the anticodon CAU, in an ATP-dependent manner. Cytidine is converted to lysidine, thus changing the amino acid specificity of the tRNA from methionine to isoleucine. This Zymomonas mobilis subsp. mobilis (strain ATCC 31821 / ZM4 / CP4) protein is tRNA(Ile)-lysidine synthase.